A 248-amino-acid chain; its full sequence is MILFPAIDLKDGQCVRLKLGDMEQATVYNSDPAAQARAFEEQGFEWLHVVDLNGAFAGETVNGDAVDAILRATKNPVQLGGGIRTLDHIENWLARGLKRVILGTVAVRDPALVIEACRKFPGRIAVGIDAKGGKVAVEGWAEASELGVIELARRFEGAGVAAIIYTDIDRDGILTGINWAATLELSDAVSIPVIASGGLASLDDIRRMTEPEAQKLEGAISGRALYDGRIDPKEALDLIREARKGMIR.

The active-site Proton acceptor is aspartate 8. The Proton donor role is filled by aspartate 129.

Belongs to the HisA/HisF family.

The protein localises to the cytoplasm. It catalyses the reaction 1-(5-phospho-beta-D-ribosyl)-5-[(5-phospho-beta-D-ribosylamino)methylideneamino]imidazole-4-carboxamide = 5-[(5-phospho-1-deoxy-D-ribulos-1-ylimino)methylamino]-1-(5-phospho-beta-D-ribosyl)imidazole-4-carboxamide. It participates in amino-acid biosynthesis; L-histidine biosynthesis; L-histidine from 5-phospho-alpha-D-ribose 1-diphosphate: step 4/9. This chain is 1-(5-phosphoribosyl)-5-[(5-phosphoribosylamino)methylideneamino] imidazole-4-carboxamide isomerase, found in Sinorhizobium medicae (strain WSM419) (Ensifer medicae).